An 89-amino-acid polypeptide reads, in one-letter code: Small ribosomal subunit protein bS16c (89 aa).

It belongs to the bacterial ribosomal protein bS16 family.

The protein resides in the plastid. Its subcellular location is the chloroplast. This is Small ribosomal subunit protein bS16c from Drimys granadensis.